Consider the following 464-residue polypeptide: Trehalose-6-phosphate synthase (464 aa).

R10 is a D-glucose 6-phosphate binding site. 23–24 (GG) lines the UDP-alpha-D-glucose pocket. Residues Y81 and D135 each contribute to the D-glucose 6-phosphate site. 2 residues coordinate UDP-alpha-D-glucose: R268 and K273. D-glucose 6-phosphate is bound at residue R306. Residue 371 to 375 (LVAKE) participates in UDP-alpha-D-glucose binding.

The protein belongs to the glycosyltransferase 20 family. As to quaternary structure, homotetramer.

It catalyses the reaction D-glucose 6-phosphate + UDP-alpha-D-glucose = alpha,alpha-trehalose 6-phosphate + UDP + H(+). It functions in the pathway glycan biosynthesis; trehalose biosynthesis. Functionally, probably involved in the osmoprotection via the biosynthesis of trehalose. Catalyzes the transfer of glucose from UDP-alpha-D-glucose (UDP-Glc) to D-glucose 6-phosphate (Glc-6-P) to form trehalose-6-phosphate. Acts with retention of the anomeric configuration of the UDP-sugar donor. This Sinorhizobium fredii (strain NBRC 101917 / NGR234) protein is Trehalose-6-phosphate synthase.